The primary structure comprises 395 residues: Dual specificity mitogen-activated protein kinase kinase 1 (395 aa).

A disordered region spans residues 1 to 24 (MPKKKPTPIQLNPNPEGTAVNGTP). The segment covering 9 to 24 (IQLNPNPEGTAVNGTP) has biased composition (polar residues). The Protein kinase domain maps to 68-363 (FEKVSELGAG…LKQLMVHSFI (296 aa)). Residues 74-82 (LGAGNGGVV) and lysine 97 contribute to the ATP site. The Proton acceptor role is filled by aspartate 190. Residues serine 218 and serine 222 each carry the phosphoserine; by RAF modification. Positions 284–305 (ASSELAPRPRPPGRPISSYGPD) are disordered.

The protein belongs to the protein kinase superfamily. STE Ser/Thr protein kinase family. MAP kinase kinase subfamily. In terms of processing, activated by phosphorylation on Ser/Thr catalyzed by MAP kinase kinase kinases (RAF or MOS). In terms of tissue distribution, expressed in the central nervous system, kidney, liver, intestine and the hematopoietic system.

The protein localises to the cytoplasm. Its subcellular location is the cytoskeleton. The protein resides in the microtubule organizing center. It is found in the centrosome. It localises to the spindle pole body. The protein localises to the nucleus. It catalyses the reaction L-seryl-[protein] + ATP = O-phospho-L-seryl-[protein] + ADP + H(+). The catalysed reaction is L-threonyl-[protein] + ATP = O-phospho-L-threonyl-[protein] + ADP + H(+). It carries out the reaction L-tyrosyl-[protein] + ATP = O-phospho-L-tyrosyl-[protein] + ADP + H(+). In terms of biological role, dual specificity protein kinase which acts as an essential component of the MAP kinase signal transduction pathway. Binding of extracellular ligands such as growth factors, cytokines and hormones to their cell-surface receptors activates the MAPK/ERK cascade, ultimately leading to phosphorylation of a threonine and a tyrosine residue in a Thr-Glu-Tyr sequence located in MAP kinases. Depending on the cellular context, this pathway mediates diverse biological functions such as cell growth, adhesion, survival and differentiation predominantly through the regulation of transcription, metabolism and cytoskeletal rearrangements. This Xenopus laevis (African clawed frog) protein is Dual specificity mitogen-activated protein kinase kinase 1 (map2k1).